The sequence spans 633 residues: Basic helix-loop-helix ARNT-like protein 1 (633 aa).

The disordered stretch occupies residues 1 to 65; it reads MADQRMDISS…GMDTDKDDQH (65 aa). Serine 17 is subject to Phosphoserine; by GSK3-beta. Residues 24 to 33 show a composition bias toward polar residues; that stretch reads ISSSLSTSGM. The short motif at 36 to 41 is the Nuclear localization signal element; sequence NRKRKG. The bHLH domain maps to 79 to 132; that stretch reads NAREAHSQIEKRRRDKMNSFIDELASLVPTCNAMSRKLDKLTVLRMAVQHMKTL. Serine 85 carries the phosphoserine modification. Serine 97 carries the phosphoserine; by CK2 modification. The Nuclear export signal 1 signature appears at 149-159; the sequence is LSDDELKHLIL. The PAS 1 domain occupies 150–222; sequence SDDELKHLIL…EQLSSSDTAP (73 aa). Lysine 259 participates in a covalent cross-link: Glycyl lysine isopeptide (Lys-Gly) (interchain with G-Cter in SUMO2 and SUMO3). Lysine 266 participates in a covalent cross-link: Glycyl lysine isopeptide (Lys-Gly) (interchain with G-Cter in SUMO). In terms of domain architecture, PAS 2 spans 333-403; sequence PQPVNGEIRV…ECHRQVLQTR (71 aa). Residues 368–376 carry the Nuclear export signal 2 motif; it reads LAYLPQELL. In terms of domain architecture, PAC spans 408 to 451; it reads TNCYKFKIKDGSFITLRSRWFSFMNPWTKEVEYIVSTNTVVSTN. Disordered regions lie at residues 472–499 and 518–555; these read SVLQAGEGGPKRTHPTVPGIPGGTRAGA and GSSPSSCGSSPLNITSTPPPDTSSPGGKKILNGGTPDI. Residues 518–528 are compositionally biased toward low complexity; sequence GSSPSSCGSSP. Lysine 545 is modified (N6-acetyllysine).

Component of the circadian clock oscillator which includes the CRY1/2 proteins, CLOCK or NPAS2, BMAL1 or BMAL2, CSNK1D and/or CSNK1E, TIMELESS and the PER1/2/3 proteins. Forms a heterodimer with CLOCK. The CLOCK-BMAL1 heterodimer is required for E-box-dependent transactivation, for CLOCK nuclear translocation and degradation, and, for phosphorylation of both CLOCK and BMAL1. Interacts with PER1, PER2, CRY1 and CRY2 and this interaction requires a translocation to the nucleus. Interaction of the CLOCK-BMAL1 heterodimer with PER or CRY inhibits transcription activation. Post-translationally, ubiquitinated, leading to its proteasomal degradation. Deubiquitinated by USP9X. In terms of processing, O-glycosylated; contains O-GlcNAc. O-glycosylation by OGT prevents protein degradation by inhibiting ubiquitination. It also stabilizes the CLOCK-BMAL1 heterodimer thereby increasing CLOCK-BMAL1-mediated transcription of genes in the negative loop of the circadian clock such as PER1/2/3 and CRY1/2. Acetylated on Lys-545 by CLOCK during the repression phase of the circadian cycle. Acetylation facilitates recruitment of CRY1 protein and initiates the repression phase of the circadian cycle. Acetylated at Lys-545 by KAT5 during the activation phase of the cycle, leading to recruitment of the positive transcription elongation factor b (P-TEFb) and BRD4, followed by productive elongation of circadian transcripts. Deacetylated by SIRT1, which may result in decreased protein stability. Post-translationally, phosphorylated upon dimerization with CLOCK. Phosphorylation enhances the transcriptional activity, alters the subcellular localization and decreases the stability of the CLOCK-BMAL1 heterodimer by promoting its degradation. Phosphorylation shows circadian variations in the liver with a peak between CT10 to CT14. Phosphorylation at Ser-97 by CK2 is essential for its nuclear localization, its interaction with CLOCK and controls CLOCK nuclear entry. Dephosphorylation at Ser-85 is important for dimerization with CLOCK and transcriptional activity. In terms of processing, sumoylated on Lys-266 upon dimerization with CLOCK. Predominantly conjugated to poly-SUMO2/3 rather than SUMO1 and the level of these conjugates undergo rhythmic variation, peaking at CT9-CT12. Sumoylation localizes it exclusively to the PML body and promotes its ubiquitination in the PML body, ubiquitin-dependent proteasomal degradation and the transcriptional activity of the CLOCK-BMAL1 heterodimer. Undergoes lysosome-mediated degradation in a time-dependent manner in the liver.

It localises to the nucleus. Its subcellular location is the cytoplasm. It is found in the PML body. Functionally, transcriptional activator which forms a core component of the circadian clock. The circadian clock, an internal time-keeping system, regulates various physiological processes through the generation of approximately 24 hour circadian rhythms in gene expression, which are translated into rhythms in metabolism and behavior. It is derived from the Latin roots 'circa' (about) and 'diem' (day) and acts as an important regulator of a wide array of physiological functions including metabolism, sleep, body temperature, blood pressure, endocrine, immune, cardiovascular, and renal function. Consists of two major components: the central clock, residing in the suprachiasmatic nucleus (SCN) of the brain, and the peripheral clocks that are present in nearly every tissue and organ system. Both the central and peripheral clocks can be reset by environmental cues, also known as Zeitgebers (German for 'timegivers'). The predominant Zeitgeber for the central clock is light, which is sensed by retina and signals directly to the SCN. The central clock entrains the peripheral clocks through neuronal and hormonal signals, body temperature and feeding-related cues, aligning all clocks with the external light/dark cycle. Circadian rhythms allow an organism to achieve temporal homeostasis with its environment at the molecular level by regulating gene expression to create a peak of protein expression once every 24 hours to control when a particular physiological process is most active with respect to the solar day. Transcription and translation of core clock components (CLOCK, NPAS2, BMAL1, BMAL2, PER1, PER2, PER3, CRY1 and CRY2) plays a critical role in rhythm generation, whereas delays imposed by post-translational modifications (PTMs) are important for determining the period (tau) of the rhythms (tau refers to the period of a rhythm and is the length, in time, of one complete cycle). A diurnal rhythm is synchronized with the day/night cycle, while the ultradian and infradian rhythms have a period shorter and longer than 24 hours, respectively. Disruptions in the circadian rhythms contribute to the pathology of cardiovascular diseases, cancer, metabolic syndromes and aging. A transcription/translation feedback loop (TTFL) forms the core of the molecular circadian clock mechanism. Transcription factors, CLOCK or NPAS2 and BMAL1 or BMAL2, form the positive limb of the feedback loop, act in the form of a heterodimer and activate the transcription of core clock genes and clock-controlled genes (involved in key metabolic processes), harboring E-box elements (5'-CACGTG-3') within their promoters. The core clock genes: PER1/2/3 and CRY1/2 which are transcriptional repressors form the negative limb of the feedback loop and interact with the CLOCK|NPAS2-BMAL1|BMAL2 heterodimer inhibiting its activity and thereby negatively regulating their own expression. This heterodimer also activates nuclear receptors NR1D1/2 and RORA/B/G, which form a second feedback loop and which activate and repress BMAL1 transcription, respectively. The preferred binding motif for the CLOCK-BMAL1 heterodimer is 5'-CACGTGA-3', which contains a flanking adenine nucleotide at the 3-prime end of the canonical 6-nucleotide E-box sequence. CLOCK specifically binds to the half-site 5'-CAC-3', while BMAL1 binds to the half-site 5'-GTGA-3'. Essential for the rhythmic interaction of CLOCK with ASS1 and plays a critical role in positively regulating CLOCK-mediated acetylation of ASS1. Plays a role in protecting against lethal sepsis by limiting the expression of immune checkpoint protein CD274 in macrophages in a PKM2-dependent manner. The polypeptide is Basic helix-loop-helix ARNT-like protein 1 (BMAL1) (Tyto alba (Barn owl)).